Reading from the N-terminus, the 427-residue chain is mRNA cap guanine-N(7) methyltransferase (427 aa).

Residues 1–79 (MSLNYEQNAA…EPETEAASGA (79 aa)) form a disordered region. A phosphoserine mark is found at S22, S24, S29, S46, and S48. The span at 44-57 (HVSKSPREYYDEPG) shows a compositional bias: basic and acidic residues. In terms of domain architecture, mRNA cap 0 methyltransferase spans 103 to 411 (SKIFFMRNFN…LYLVCAFKKC (309 aa)). 112 to 113 (NN) provides a ligand contact to mRNA. S-adenosyl-L-methionine contacts are provided by K116, C143, D165, D202, Q225, and Y230.

Belongs to the class I-like SAM-binding methyltransferase superfamily. mRNA cap 0 methyltransferase family.

Its subcellular location is the nucleus. It carries out the reaction a 5'-end (5'-triphosphoguanosine)-ribonucleoside in mRNA + S-adenosyl-L-methionine = a 5'-end (N(7)-methyl 5'-triphosphoguanosine)-ribonucleoside in mRNA + S-adenosyl-L-homocysteine. Its function is as follows. mRNA-capping methyltransferase that methylates the N7 position of the added guanosine to the 5'-cap structure of mRNAs. Binds RNA containing 5'-terminal GpppC. This is mRNA cap guanine-N(7) methyltransferase from Drosophila melanogaster (Fruit fly).